Reading from the N-terminus, the 448-residue chain is Ribulose bisphosphate carboxylase large chain (448 aa).

At K4 the chain carries N6,N6,N6-trimethyllysine. Substrate-binding residues include N113 and T163. The active-site Proton acceptor is the K165. K167 serves as a coordination point for substrate. Positions 191, 193, and 194 each coordinate Mg(2+). The residue at position 191 (K191) is an N6-carboxylysine. The active-site Proton acceptor is the H284. Substrate-binding residues include R285, H317, and S369.

The protein belongs to the RuBisCO large chain family. Type I subfamily. Heterohexadecamer of 8 large chains and 8 small chains; disulfide-linked. The disulfide link is formed within the large subunit homodimers. Mg(2+) serves as cofactor. The disulfide bond which can form in the large chain dimeric partners within the hexadecamer appears to be associated with oxidative stress and protein turnover.

The protein localises to the plastid. Its subcellular location is the chloroplast. The enzyme catalyses 2 (2R)-3-phosphoglycerate + 2 H(+) = D-ribulose 1,5-bisphosphate + CO2 + H2O. It catalyses the reaction D-ribulose 1,5-bisphosphate + O2 = 2-phosphoglycolate + (2R)-3-phosphoglycerate + 2 H(+). Its function is as follows. RuBisCO catalyzes two reactions: the carboxylation of D-ribulose 1,5-bisphosphate, the primary event in carbon dioxide fixation, as well as the oxidative fragmentation of the pentose substrate in the photorespiration process. Both reactions occur simultaneously and in competition at the same active site. The protein is Ribulose bisphosphate carboxylase large chain of Eucryphia lucida (Leatherwood).